We begin with the raw amino-acid sequence, 349 residues long: Probable dual-specificity RNA methyltransferase RlmN (349 aa).

Glu-94 functions as the Proton acceptor in the catalytic mechanism. The region spanning 100–334 is the Radical SAM core domain; that stretch reads TETRTTACVS…VKVRRSRGKD (235 aa). A disulfide bond links Cys-107 and Cys-339. [4Fe-4S] cluster is bound by residues Cys-114, Cys-118, and Cys-121. Residues 165–166, Ser-197, 220–222, and Asn-296 each bind S-adenosyl-L-methionine; these read GE and SLH. Catalysis depends on Cys-339, which acts as the S-methylcysteine intermediate.

This sequence belongs to the radical SAM superfamily. RlmN family. The cofactor is [4Fe-4S] cluster.

It is found in the cytoplasm. It carries out the reaction adenosine(2503) in 23S rRNA + 2 reduced [2Fe-2S]-[ferredoxin] + 2 S-adenosyl-L-methionine = 2-methyladenosine(2503) in 23S rRNA + 5'-deoxyadenosine + L-methionine + 2 oxidized [2Fe-2S]-[ferredoxin] + S-adenosyl-L-homocysteine. The catalysed reaction is adenosine(37) in tRNA + 2 reduced [2Fe-2S]-[ferredoxin] + 2 S-adenosyl-L-methionine = 2-methyladenosine(37) in tRNA + 5'-deoxyadenosine + L-methionine + 2 oxidized [2Fe-2S]-[ferredoxin] + S-adenosyl-L-homocysteine. Its function is as follows. Specifically methylates position 2 of adenine 2503 in 23S rRNA and position 2 of adenine 37 in tRNAs. The sequence is that of Probable dual-specificity RNA methyltransferase RlmN from Flavobacterium johnsoniae (strain ATCC 17061 / DSM 2064 / JCM 8514 / BCRC 14874 / CCUG 350202 / NBRC 14942 / NCIMB 11054 / UW101) (Cytophaga johnsonae).